Here is an 812-residue protein sequence, read N- to C-terminus: Leucine-rich repeat-containing protein 41 (812 aa).

The interval 45–54 is interaction with Elongin BC complex; sequence ALFELCGRAV. Phosphoserine occurs at positions 155, 276, and 326. Residues 267 to 408 are disordered; it reads GEASRGRAPS…GARTRQGPGA (142 aa). At Thr-327 the chain carries Phosphothreonine. Low complexity predominate over residues 354-381; sequence TKRSPSAPAATSSASSSTSSYKRAPASS. A phosphoserine mark is found at Ser-357 and Ser-373. Residues 387–401 are compositionally biased toward basic residues; sequence PLKRFKRAAGKKGAR. LRR repeat units lie at residues 487-507, 518-530, 531-555, 613-635, 636-659, 701-728, and 731-752; these read WVSL…IFRL, AGCR…LSDL, FSPL…VLSI, SGSL…FGLV, LQTL…LADC, NSTL…VFSE, and SSSL…LLEF.

Part of an E3 ubiquitin-protein ligase complex with Elongin BC (ELOB and ELOC), RBX1 and CUL5. Component of a probable ECS(LRRC41) complex which contains CUL5, RNF7/RBX2, Elongin BC and LRRC41. Interacts with CUL5, RNF7, ELOB and ELOC.

It participates in protein modification; protein ubiquitination. Probable substrate recognition component of an ECS (Elongin BC-CUL2/5-SOCS-box protein) E3 ubiquitin ligase complex which mediates the ubiquitination and subsequent proteasomal degradation of target proteins. This is Leucine-rich repeat-containing protein 41 (LRRC41) from Homo sapiens (Human).